The following is a 246-amino-acid chain: Breast cancer metastasis-suppressor 1 homolog (246 aa).

The tract at residues 1–57 is disordered; it reads MPIQPSGKETEEMEAEGDSAAEMNGEADESEEERSGSQTESEEESSEMDDEDYERRR. 2 stretches are compositionally biased toward acidic residues: residues 11-32 and 40-52; these read EEME…ESEE and ESEE…DDED. Positions 51 to 98 form a coiled coil; it reads EDYERRRSECVSEMLDLEKQFSELKEKLFRERLSQLRLRLEEVGAERA. Glycyl lysine isopeptide (Lys-Gly) (interchain with G-Cter in SUMO2) cross-links involve residues Lys-184 and Lys-242.

The protein belongs to the BRMS1 family. As to quaternary structure, homohexamer (Potential). Interacts with SNX6, HDAC1 and RELA. Interacts with ARID4A. Identified in mSin3A corepressor complexes together with SIN3A, SIN3B, RBBP4, RBBP7, SAP30, SUDS3, ARID4A, HDAC1 and HDAC2. Interacts with SPOP; this recruits the protein to a ubiquitin ligase complex containing SPOP and CUL3. Post-translationally, ubiquitinated by a cullin-RING-based BCR (BTB-CUL3-RBX1) E3 ubiquitin-protein ligase complex containing SPOP, leading to proteasomal degradation.

It localises to the nucleus. The protein localises to the cytoplasm. Transcriptional repressor. Down-regulates transcription activation by NF-kappa-B by promoting the deacetylation of RELA at 'Lys-310'. Promotes HDAC1 binding to promoter regions. Down-regulates expression of anti-apoptotic genes that are controlled by NF-kappa-B. Promotes apoptosis in cells that have inadequate adherence to a substrate, a process called anoikis, and may thereby inhibit metastasis. This chain is Breast cancer metastasis-suppressor 1 homolog (Brms1), found in Mus musculus (Mouse).